Consider the following 217-residue polypeptide: Growth hormone variant (217 aa).

The N-terminal stretch at 1-26 (MAAGSRTSLLLAFGLLCLSWLQEGSA) is a signal peptide. Disulfide bonds link Cys79/Cys191 and Cys208/Cys215. Ser132 is subject to Phosphoserine. The N-linked (GlcNAc...) asparagine glycan is linked to Asn166. The residue at position 176 (Ser176) is a Phosphoserine.

This sequence belongs to the somatotropin/prolactin family. In terms of assembly, monomer, dimer, trimer, tetramer and pentamer, disulfide-linked or non-covalently associated, in homomeric and heteromeric combinations. Can also form a complex either with GHBP or with the alpha2-macroglobulin complex. In terms of tissue distribution, expressed in the placenta.

Its subcellular location is the secreted. In terms of biological role, plays an important role in growth control. Its major role in stimulating body growth is to stimulate the liver and other tissues to secrete IGF1. It stimulates both the differentiation and proliferation of myoblasts. It also stimulates amino acid uptake and protein synthesis in muscle and other tissues. The polypeptide is Growth hormone variant (GH2) (Homo sapiens (Human)).